The following is a 343-amino-acid chain: MSEIGVAVLGVGLMGADHVARIASRISGARVAVVNDQVTEKAERLAATITGCRAIADPLDAIADRDVDAVVLATPGPTHEKQLLACLEHRKPVLCEKPLTTDVETSLEVVRREAELGVRLIQVGFMRRFDDEYRALKALIDGGELGNPLVLHCVHRNPVVPGHFDSAMTVRDSLVHEVDVTRFLFDEEIVSIQIVKPTPNSLAREGLFDPQIAILRTASGRHVDVELFVTTGVAYEVRTELVAEKGSVIIGLDVGLVRKSAPGTWGGTITPSFKERFGQAYDTEIQRWVDAVRSGGTTGIYTDGPTAWDGYAATAVCEAGVQALQSGQPVAVSMVDRVSIPGA.

This sequence belongs to the Gfo/Idh/MocA family. In terms of assembly, homotetramer.

The enzyme catalyses myo-inositol + NAD(+) = scyllo-inosose + NADH + H(+). Involved in the oxidation of myo-inositol (MI) to 2-keto-myo-inositol (2KMI or 2-inosose). The sequence is that of Inositol 2-dehydrogenase 1 from Mycolicibacterium vanbaalenii (strain DSM 7251 / JCM 13017 / BCRC 16820 / KCTC 9966 / NRRL B-24157 / PYR-1) (Mycobacterium vanbaalenii).